The sequence spans 80 residues: RNA-binding protein Hfq (80 aa).

Positions 9-69 constitute a Sm domain; it reads DVFLNQVRKE…ISTILPITPI (61 aa).

The protein belongs to the Hfq family. In terms of assembly, homohexamer.

Functionally, RNA chaperone that binds small regulatory RNA (sRNAs) and mRNAs to facilitate mRNA translational regulation in response to envelope stress, environmental stress and changes in metabolite concentrations. Also binds with high specificity to tRNAs. This is RNA-binding protein Hfq from Alkaliphilus metalliredigens (strain QYMF).